We begin with the raw amino-acid sequence, 2231 residues long: Helicase SEN1 (2231 aa).

Residues 1-17 (MNSNNPDNNNSNNINNN) are compositionally biased toward low complexity. Disordered stretches follow at residues 1-24 (MNSNNPDNNNSNNINNNNKDKDIA) and 1032-1061 (HPPSAPAFHTKSRGLSNKNDDSSSEESDND). Residues Gln1339 and 1360-1364 (GTGKT) each bind ATP. A disordered region spans residues 1491-1511 (ELRGKLDSESGNPESPMSTED). Residues 1499–1510 (ESGNPESPMSTE) show a composition bias toward polar residues. Gln1619, Tyr1655, and Glu1787 together coordinate ATP. 2 disordered regions span residues 1894 to 1993 (ITQG…AVVG) and 2032 to 2231 (QLGL…KPRS). The Nuclear localization signal motif lies at 1909 to 1927 (KRRVVDEGEEADKAVKKKK). A compositionally biased stretch (basic residues) spans 1923 to 1937 (VKKKKKEKKKEKKKS). A compositionally biased stretch (basic and acidic residues) spans 1938–1950 (KADDKKKNNKKAE). Acidic residues predominate over residues 2048-2058 (NNEDDDDEDDY). Composition is skewed to polar residues over residues 2060–2088 (PSISDSSLMKSEANGRNNRVASHNQNFSA) and 2095–2104 (QVSQAKQTQV). Over residues 2114 to 2123 (SNSVLSGGSS) the composition is skewed to low complexity. The span at 2134-2160 (PNQNGQNGANRTLSQHVGNANQYSTAP) shows a compositional bias: polar residues. The segment covering 2210 to 2220 (RNSSRRNASSS) has biased composition (low complexity).

The protein belongs to the DNA2/NAM7 helicase family. Interacts with RAD2, RNT1 and RPB1. Binds to multiple snoRNAs.

It localises to the nucleus. In terms of biological role, ATP-dependent 5'-&gt;3' DNA/RNA helicase required for the expression and maturation of diverse classes of non-protein-coding RNAs like precursor tRNAs, rRNAs and small nuclear (snRNA) and nucleolar (snoRNA) RNAs. Directs RNA polymerase II transcription termination on snoRNAs as well as on several short protein-coding genes. May also play a role in transcription-coupled nucleotide excision repair. The protein is Helicase SEN1 (SEN1) of Saccharomyces cerevisiae (strain ATCC 204508 / S288c) (Baker's yeast).